A 549-amino-acid chain; its full sequence is Cytoplasmic trehalase (549 aa).

Substrate-binding positions include R168, 175–176, N212, 221–223, 292–294, and G324; these read WD, RSQ, and RDE. Catalysis depends on proton donor/acceptor residues D326 and E509. E525 contributes to the substrate binding site.

The protein belongs to the glycosyl hydrolase 37 family. Monomer.

Its subcellular location is the cytoplasm. It catalyses the reaction alpha,alpha-trehalose + H2O = alpha-D-glucose + beta-D-glucose. It functions in the pathway glycan degradation; trehalose degradation; D-glucose from alpha,alpha-trehalose: step 1/1. Hydrolyzes trehalose to glucose. Could be involved, in cells returning to low osmolarity conditions, in the utilization of the accumulated cytoplasmic trehalose, which was synthesized in response to high osmolarity. In Salmonella typhi, this protein is Cytoplasmic trehalase.